Consider the following 92-residue polypeptide: DNA-directed RNA polymerase subunit Rpo11 (92 aa).

It belongs to the archaeal Rpo11/eukaryotic RPB11/RPC19 RNA polymerase subunit family. As to quaternary structure, part of the RNA polymerase complex.

It localises to the cytoplasm. It carries out the reaction RNA(n) + a ribonucleoside 5'-triphosphate = RNA(n+1) + diphosphate. Its function is as follows. DNA-dependent RNA polymerase (RNAP) catalyzes the transcription of DNA into RNA using the four ribonucleoside triphosphates as substrates. The sequence is that of DNA-directed RNA polymerase subunit Rpo11 from Pyrobaculum aerophilum (strain ATCC 51768 / DSM 7523 / JCM 9630 / CIP 104966 / NBRC 100827 / IM2).